Here is a 225-residue protein sequence, read N- to C-terminus: MQRPSGSREVRKAVSAVSASKKEQATRVKKHVVRRQKGTMAAAPKSHVHVKKLTVEEGVRTGKNSVHQLQAQVDTATQQESSQGPVLLSQLPETTSVPYTPETMGQQLTVSLSGEPYGPSAMPSMCPSLILQPCATTDPMLLQPQGSSASNQASVSATLEWQEMLEAAEALLALKNSSQTRHQPCGMPGTAGERGLQLPNPSMPPRPASSGSLPSGHLDCMSLLT.

The span at Met-1–Lys-12 shows a compositional bias: basic and acidic residues. 2 disordered regions span residues Met-1–His-49 and Gln-179–Gly-216. Residues Arg-27–Lys-37 are compositionally biased toward basic residues.

It belongs to the DMRT family.

The polypeptide is Doublesex- and mab-3-related transcription factor C1 (Dmrtc1) (Rattus norvegicus (Rat)).